Reading from the N-terminus, the 379-residue chain is ATP-sensitive inward rectifier potassium channel 10 (379 aa).

The Cytoplasmic portion of the chain corresponds to 1–61 (MTSVAKVYYS…LKDLWTTFID (61 aa)). Arginine 36 contributes to the 1,2-dioctanoyl-sn-glycero-3-phospho-(1D-myo-inositol-4,5-bisphosphate) binding site. A helical membrane pass occupies residues 62-88 (MQWRYKLLLFSATFAGTWFLFGVVWYL). Residues 89–114 (VAVAHGDLLELGPPANHTPCVVQVHT) are Extracellular-facing. Cysteine 108 and cysteine 140 are disulfide-bonded. The discontinuously helical; Pore-forming intramembrane region spans 115 to 131 (LTGAFLFSLESQTTIGY). Positions 128–133 (TIGYGF) match the Selectivity filter motif. The Extracellular portion of the chain corresponds to 132–140 (GFRYISEEC). A helical transmembrane segment spans residues 141–166 (PLAIVLLIAQLVLTTILEIFITGTFL). Residues 167 to 379 (AKIARPKKRA…SALSVRISNV (213 aa)) are Cytoplasmic-facing. Residues lysine 168, arginine 171, and lysine 173 each contribute to the 1,2-dioctanoyl-sn-glycero-3-phospho-(1D-myo-inositol-4,5-bisphosphate) site. 210–217 (GCQVTGKL) contributes to the ATP binding site.

It belongs to the inward rectifier-type potassium channel (TC 1.A.2.1) family. KCNJ10 subfamily. As to quaternary structure, homotetramer. In kidney cells, it forms heteromeric channels with Kir5.1/KCNJ16; this interaction is required for KCNJ16 localization to the basolateral membrane. Interacts with MAGI1, alone and possibly as a heteromer with KCNJ16; this interaction may facilitate KCNJ10/KCNJ16 potassium channel expression at the basolateral membrane in kidney cells. Interacts with PATJ. As to expression, widely expressed in adult brain, including in the neocortex, the stratum pyrimadale of the hippocampus and the piriform cortex. Expressed by cultured astrocytes and also by cocultured cortical neurons (at protein level). In the distal segment of the nephron, expressed in the distal convoluted tubule, the connecting tubule, and the early cortical collecting duct.

It is found in the membrane. Its subcellular location is the basolateral cell membrane. The enzyme catalyses K(+)(in) = K(+)(out). Its activity is regulated as follows. Channel activity is strongly regulated by variations of cytosolic pH; channels are activated by alkaline and inhibited by acidic pH values. Activated by phosphatidylinositol 4,5 biphosphate (PtdIns(4,5)P2). Inhibited by Ba(2+) and Cs(+). In terms of biological role, may be responsible for potassium buffering action of glial cells in the brain. Inward rectifier potassium channels are characterized by a greater tendency to allow potassium to flow into the cell rather than out of it. Their voltage dependence is regulated by the concentration of extracellular potassium; as external potassium is raised, the voltage range of the channel opening shifts to more positive voltages. The inward rectification is mainly due to the blockage of outward current by internal magnesium. Can be blocked by extracellular barium and cesium. In the kidney, together with KCNJ16, mediates basolateral K(+) recycling in distal tubules; this process is critical for Na(+) reabsorption at the tubules. This is ATP-sensitive inward rectifier potassium channel 10 from Mus musculus (Mouse).